The sequence spans 671 residues: DNA ligase (671 aa).

Residues 32 to 36 (DAEYD), 81 to 82 (SL), and Glu113 each bind NAD(+). The active-site N6-AMP-lysine intermediate is Lys115. NAD(+) contacts are provided by Arg136, Glu173, Lys290, and Lys314. Zn(2+) contacts are provided by Cys408, Cys411, Cys426, and Cys432. In terms of domain architecture, BRCT spans 593–671 (EIDSPFAGKT…EAEMLRLLGS (79 aa)).

It belongs to the NAD-dependent DNA ligase family. LigA subfamily. Mg(2+) serves as cofactor. Mn(2+) is required as a cofactor.

The catalysed reaction is NAD(+) + (deoxyribonucleotide)n-3'-hydroxyl + 5'-phospho-(deoxyribonucleotide)m = (deoxyribonucleotide)n+m + AMP + beta-nicotinamide D-nucleotide.. DNA ligase that catalyzes the formation of phosphodiester linkages between 5'-phosphoryl and 3'-hydroxyl groups in double-stranded DNA using NAD as a coenzyme and as the energy source for the reaction. It is essential for DNA replication and repair of damaged DNA. In Shigella sonnei (strain Ss046), this protein is DNA ligase.